The primary structure comprises 148 residues: Basic leucine zipper 4 (148 aa).

In terms of domain architecture, bZIP spans 48–97 (DDKKRRRTISNRESAKRSRMKKKKRFEELTEEVNRLNIRNQELKNRLANV). Positions 50-70 (KKRRRTISNRESAKRSRMKKK) are disordered. The interval 50-72 (KKRRRTISNRESAKRSRMKKKKR) is basic motif. A leucine-zipper region spans residues 76-90 (LTEEVNRLNIRNQEL).

It is found in the nucleus. Its function is as follows. Probable transcription factor involved in somatic embryogenesis. Acts as a positive regulator of BHLH109. The sequence is that of Basic leucine zipper 4 from Arabidopsis thaliana (Mouse-ear cress).